Reading from the N-terminus, the 404-residue chain is Glycosyltransferase GlyB (404 aa).

A GT8 domain region spans residues 1-267 (MNTKSIVFNA…ILLRKDIISR (267 aa)). UDP is bound by residues 9–14 (NADNDY) and 103–104 (DS). Positions 103, 105, and 228 each coordinate Mn(2+). A UDP-binding site is contributed by 228-233 (HYTGVK).

It in the N-terminal section; belongs to the glycosyltransferase 8 family.

In terms of biological role, may be involved in the polymorphic O-glycosylation of the serine-rich repeat protein PsrP. Has equal hydrolytic activity against both UDP-galactose and UDP-glucose; no glycosyltransferase activity has been seen with tested substrates. This Streptococcus pneumoniae serotype 4 (strain ATCC BAA-334 / TIGR4) protein is Glycosyltransferase GlyB.